A 165-amino-acid polypeptide reads, in one-letter code: Growth arrest and DNA damage-inducible protein GADD45 alpha (165 aa).

The residue at position 2 (T2) is a Phosphothreonine.

Belongs to the GADD45 family. Interacts with AURKA, GADD45GIP1 and PCNA. Interacts with MAPK14.

It is found in the nucleus. Might affect PCNA interaction with some CDK (cell division protein kinase) complexes; stimulates DNA excision repair in vitro and inhibits entry of cells into S phase. In T-cells, functions as a regulator of p38 MAPKs by inhibiting p88 phosphorylation and activity. In Mus musculus (Mouse), this protein is Growth arrest and DNA damage-inducible protein GADD45 alpha (Gadd45a).